The chain runs to 290 residues: ATP synthase gamma chain (290 aa).

The protein belongs to the ATPase gamma chain family. F-type ATPases have 2 components, CF(1) - the catalytic core - and CF(0) - the membrane proton channel. CF(1) has five subunits: alpha(3), beta(3), gamma(1), delta(1), epsilon(1). CF(0) has three main subunits: a, b and c.

It is found in the cell inner membrane. Produces ATP from ADP in the presence of a proton gradient across the membrane. The gamma chain is believed to be important in regulating ATPase activity and the flow of protons through the CF(0) complex. This Delftia acidovorans (strain DSM 14801 / SPH-1) protein is ATP synthase gamma chain.